The sequence spans 697 residues: DNA ligase (697 aa).

NAD(+)-binding positions include 41–45 (DPVYD), 90–91 (SL), and Glu129. Residue Lys131 is the N6-AMP-lysine intermediate of the active site. Residues Arg152, Glu189, Lys308, and Lys332 each contribute to the NAD(+) site. Residues Cys426, Cys429, Cys444, and Cys449 each coordinate Zn(2+). Residues 617–697 (AANHHLTGST…ALQNMLRGST (81 aa)) form the BRCT domain.

Belongs to the NAD-dependent DNA ligase family. LigA subfamily. The cofactor is Mg(2+). Mn(2+) is required as a cofactor.

It catalyses the reaction NAD(+) + (deoxyribonucleotide)n-3'-hydroxyl + 5'-phospho-(deoxyribonucleotide)m = (deoxyribonucleotide)n+m + AMP + beta-nicotinamide D-nucleotide.. DNA ligase that catalyzes the formation of phosphodiester linkages between 5'-phosphoryl and 3'-hydroxyl groups in double-stranded DNA using NAD as a coenzyme and as the energy source for the reaction. It is essential for DNA replication and repair of damaged DNA. The sequence is that of DNA ligase from Synechococcus sp. (strain CC9311).